Here is a 140-residue protein sequence, read N- to C-terminus: Endoribonuclease YbeY (140 aa).

The Zn(2+) site is built by His100, His104, and His110.

It belongs to the endoribonuclease YbeY family. Requires Zn(2+) as cofactor.

The protein resides in the cytoplasm. Its function is as follows. Single strand-specific metallo-endoribonuclease involved in late-stage 70S ribosome quality control and in maturation of the 3' terminus of the 16S rRNA. The polypeptide is Endoribonuclease YbeY (Helicobacter pylori (strain P12)).